Consider the following 110-residue polypeptide: UPF0060 membrane protein RSp1275 (110 aa).

A run of 4 helical transmembrane segments spans residues 8–28 (FLFA…WLVL), 33–53 (SAWL…LLTL), 63–83 (AAYG…VDGA), and 90–110 (IGGA…PQPT).

The protein belongs to the UPF0060 family.

The protein localises to the cell inner membrane. In Ralstonia nicotianae (strain ATCC BAA-1114 / GMI1000) (Ralstonia solanacearum), this protein is UPF0060 membrane protein RSp1275.